A 408-amino-acid polypeptide reads, in one-letter code: MSWDQVWIDVNLATMDPSISAPYGAITNAAMAVKDGKIAWLGPRSELPAFDVLSIPVYRGKGGWITPGLIDAHTHLIFAGNRANEFELRLQGASYEEIARSGGGIISTVKACREADEAELFELGRQRLNALAKEGVTTVEIKSGYGLDTETELKILRVARELGKHHHVDVKTTFLGAHAIPPEYKDNSDGYVDLIINKMLPAVIAENLADAVDVFCENIAFNLEQTERVLSAAKAAGLEIKLHAEQLTNMGGSALAARLGAKSVDHIEYLDEAGVKALSESGTCAVLLPGAFYFLRETQKPPIDLLRQYGVPMVLASDFNPGSSPICSTLLMLNMGCTLFRLTPEEALKGLTLNAAKALGIEDNVGSLLVGKQADFCLWDIATPAQLAYSYGVNPCKDVVKNGKLVHQ.

Residues His73 and His75 each contribute to the Fe(3+) site. Zn(2+) contacts are provided by His73 and His75. Arg82, Tyr145, and His178 together coordinate 4-imidazolone-5-propanoate. Tyr145 serves as a coordination point for N-formimidoyl-L-glutamate. Position 243 (His243) interacts with Fe(3+). His243 provides a ligand contact to Zn(2+). Gln246 serves as a coordination point for 4-imidazolone-5-propanoate. Residue Asp318 coordinates Fe(3+). Asp318 contributes to the Zn(2+) binding site. Positions 320 and 322 each coordinate N-formimidoyl-L-glutamate. 4-imidazolone-5-propanoate is bound at residue Ser323.

This sequence belongs to the metallo-dependent hydrolases superfamily. HutI family. Zn(2+) serves as cofactor. It depends on Fe(3+) as a cofactor.

The protein localises to the cytoplasm. It carries out the reaction 4-imidazolone-5-propanoate + H2O = N-formimidoyl-L-glutamate. Its pathway is amino-acid degradation; L-histidine degradation into L-glutamate; N-formimidoyl-L-glutamate from L-histidine: step 3/3. Its function is as follows. Catalyzes the hydrolytic cleavage of the carbon-nitrogen bond in imidazolone-5-propanoate to yield N-formimidoyl-L-glutamate. It is the third step in the universal histidine degradation pathway. The polypeptide is Imidazolonepropionase (Shewanella baltica (strain OS195)).